Reading from the N-terminus, the 204-residue chain is MGAYRYMQELWRKKQSDVMRFLLRVRCWQYRQLSNLHRAPRPTRPDKARRLGYKAKQGYVIYRVRVRRGGRKRPVPKGATYGKPVHHGVNQIKFARSLQSVAEERAGRHCGALRVLNSYWVGEDSTYKFFEVILIDPFHKAIRRNPDTQWITKAVHKHREMRGLTSAGKKSRGLGKGHKFHLTIGGSRRAAWKRRNTLQLHRYR.

This sequence belongs to the eukaryotic ribosomal protein eL15 family. As to quaternary structure, component of the large ribosomal subunit.

The protein localises to the cytoplasm. Functionally, component of the large ribosomal subunit. The ribosome is a large ribonucleoprotein complex responsible for the synthesis of proteins in the cell. This Monopterus albus (Swamp eel) protein is Large ribosomal subunit protein eL15 (rpl15).